The following is a 720-amino-acid chain: F-box/LRR-repeat MAX2 homolog (720 aa).

The 47-residue stretch at 14-60 folds into the F-box domain; that stretch reads SSAILDLPEPLLLHILSFLTDVRSRHRAALACGRMRAAERATRSELS. LRR repeat units lie at residues 71-134, 135-158, 159-189, 190-218, 219-247, 248-279, 280-316, 317-344, 345-372, 373-398, 399-435, 436-452, 453-510, 511-537, 538-571, 572-606, 607-644, and 645-720; these read LFLS…QNAF, IAAR…DPTT, LANL…PDGA, DLEP…DVVR, ALTT…FKSS, ELGP…VGDD, ALLS…ITVA, GLVA…EAAP, AMEA…KASW, LHLD…LTDA, SLAA…TLRP, TLKE…HTAE, CLTA…KCRY, MEFD…LLSP, LISA…PRTI, FGLS…GQMD, LSLW…SLTL, and PAVG…QIDD.

As to quaternary structure, associates to a SCF (SKP1-CUL1-F-box protein) E3 ubiquitin-protein ligase complex. Interacts with D14 in a strigolactone-dependent manner. Interacts with SKP1, SKP5 and SKP20. Expressed in leaves. Expressed in roots, culms, leaf blades, leaf sheaths, shoot bases and panicles.

Its subcellular location is the nucleus. Its function is as follows. Involved in strigolactone (SL) signaling. Required for responses to SLs and the establishment of arbuscular mycorrhiza symbiosis in rice. Strigolactone-dependent association of D3 with D14 and D53 (a repressor of SL signaling) triggers D53 ubiquitination and degradation. Controls tillering by suppressing axillary bud activity. Tiller is a specialized grain-bearing branch that is formed on the unelongated basal internode and grows independently of the mother stem (culm) by means of its own adventitious roots. This is F-box/LRR-repeat MAX2 homolog from Oryza sativa subsp. japonica (Rice).